A 381-amino-acid chain; its full sequence is cAMP-dependent protein kinase type I-beta regulatory subunit (381 aa).

A dimerization and phosphorylation region spans residues 2 to 136; sequence ASPPACPSEE…ALAKAISKNV (135 aa). Serine 3 is subject to Phosphoserine. Tyrosine 21 is subject to 3'-nitrotyrosine. Residues 67–98 form a disordered region; sequence ARQKSNSQSDSHDEEVSPTPPNPVVKARRRRG. A phosphoserine mark is found at serine 77 and serine 83. Phosphothreonine is present on threonine 85. Residues 96–100 carry the Pseudophosphorylation motif motif; that stretch reads RRGGV. Arginine 97 carries the omega-N-methylarginine modification. Residues 137 to 254, glutamate 202, arginine 211, 255 to 381, glutamate 326, and arginine 335 contribute to the 3',5'-cyclic AMP site; these read LFAH…SKVS and ILES…SLTV.

This sequence belongs to the cAMP-dependent kinase regulatory chain family. The inactive holoenzyme is composed of two regulatory chains and two catalytic chains. Activation by cAMP releases the two active catalytic monomers and the regulatory dimer. Interacts with PRKX; regulates this cAMP-dependent protein kinase. Interacts with C2orf88/smAKAP; this interaction may target PRKAR1B to the plasma membrane. Post-translationally, the pseudophosphorylation site binds to the substrate-binding region of the catalytic chain, resulting in the inhibition of its activity. In terms of tissue distribution, four types of regulatory chains are found: I-alpha, I-beta, II-alpha, and II-beta. Their expression varies among tissues and is in some cases constitutive and in others inducible.

It localises to the cell membrane. Functionally, regulatory subunit of the cAMP-dependent protein kinases involved in cAMP signaling in cells. The protein is cAMP-dependent protein kinase type I-beta regulatory subunit (PRKAR1B) of Homo sapiens (Human).